A 428-amino-acid polypeptide reads, in one-letter code: Glutamate-1-semialdehyde 2,1-aminomutase (428 aa).

Lysine 266 is modified (N6-(pyridoxal phosphate)lysine).

The protein belongs to the class-III pyridoxal-phosphate-dependent aminotransferase family. HemL subfamily. As to quaternary structure, homodimer. It depends on pyridoxal 5'-phosphate as a cofactor.

It is found in the cytoplasm. It catalyses the reaction (S)-4-amino-5-oxopentanoate = 5-aminolevulinate. The protein operates within porphyrin-containing compound metabolism; protoporphyrin-IX biosynthesis; 5-aminolevulinate from L-glutamyl-tRNA(Glu): step 2/2. This Herminiimonas arsenicoxydans protein is Glutamate-1-semialdehyde 2,1-aminomutase.